The following is a 468-amino-acid chain: Cysteine--tRNA ligase (468 aa).

Residue C27 participates in Zn(2+) binding. The 'HIGH' region signature appears at 29–39 (PTVYNYFHIGN). Residues C207, H232, and E236 each coordinate Zn(2+). The 'KMSKS' region signature appears at 264 to 268 (KMAKS). Residue K267 participates in ATP binding.

The protein belongs to the class-I aminoacyl-tRNA synthetase family. Monomer. Zn(2+) serves as cofactor.

It localises to the cytoplasm. It catalyses the reaction tRNA(Cys) + L-cysteine + ATP = L-cysteinyl-tRNA(Cys) + AMP + diphosphate. The chain is Cysteine--tRNA ligase from Acetivibrio thermocellus (strain ATCC 27405 / DSM 1237 / JCM 9322 / NBRC 103400 / NCIMB 10682 / NRRL B-4536 / VPI 7372) (Clostridium thermocellum).